The chain runs to 227 residues: MADNQIPITQIEDGTVKQPSVWRNLLIDGLWKNNGALVQLLGLCPLLAVSNSVTNALGLGLATLFVLLCTNVTISLFRQMIPHDIRIPIYVMVIATVVTAVQLLMNAFAYPVYQSLGIFIPLIVTNCIVIGRAEAYASKHQVHHSAFDGLATGLGMTLSLVLLGAIRELIGNGTLFDGLDLLFGDWAKVLRLDLLQLDSGLLLAILPPGAFIGLGLILAVKNLFDHK.

The next 5 helical transmembrane spans lie at 57–77 (LGLGLATLFVLLCTNVTISLF), 89–109 (IYVMVIATVVTAVQLLMNAFA), 111–131 (PVYQSLGIFIPLIVTNCIVIG), 146–166 (AFDGLATGLGMTLSLVLLGAI), and 200–220 (GLLLAILPPGAFIGLGLILAV).

It belongs to the NqrDE/RnfAE family. The complex is composed of six subunits: RnfA, RnfB, RnfC, RnfD, RnfE and RnfG.

It is found in the cell inner membrane. In terms of biological role, part of a membrane-bound complex that couples electron transfer with translocation of ions across the membrane. The polypeptide is Ion-translocating oxidoreductase complex subunit E (Haemophilus ducreyi (strain 35000HP / ATCC 700724)).